We begin with the raw amino-acid sequence, 213 residues long: Peptide methionine sulfoxide reductase MsrA (213 aa).

Cys-53 is a catalytic residue.

This sequence belongs to the MsrA Met sulfoxide reductase family.

The enzyme catalyses L-methionyl-[protein] + [thioredoxin]-disulfide + H2O = L-methionyl-(S)-S-oxide-[protein] + [thioredoxin]-dithiol. It carries out the reaction [thioredoxin]-disulfide + L-methionine + H2O = L-methionine (S)-S-oxide + [thioredoxin]-dithiol. In terms of biological role, has an important function as a repair enzyme for proteins that have been inactivated by oxidation. Catalyzes the reversible oxidation-reduction of methionine sulfoxide in proteins to methionine. The polypeptide is Peptide methionine sulfoxide reductase MsrA (Serratia proteamaculans (strain 568)).